Here is a 436-residue protein sequence, read N- to C-terminus: tRNA(Ile)-lysidine synthase (436 aa).

Residue S25 to S30 coordinates ATP.

It belongs to the tRNA(Ile)-lysidine synthase family.

Its subcellular location is the cytoplasm. The catalysed reaction is cytidine(34) in tRNA(Ile2) + L-lysine + ATP = lysidine(34) in tRNA(Ile2) + AMP + diphosphate + H(+). In terms of biological role, ligates lysine onto the cytidine present at position 34 of the AUA codon-specific tRNA(Ile) that contains the anticodon CAU, in an ATP-dependent manner. Cytidine is converted to lysidine, thus changing the amino acid specificity of the tRNA from methionine to isoleucine. In Serratia proteamaculans (strain 568), this protein is tRNA(Ile)-lysidine synthase.